The sequence spans 202 residues: Holliday junction branch migration complex subunit RuvA (202 aa).

Residues 1–65 (MIAYVEGRVA…EDALELFGFS (65 aa)) form a domain I region. The segment at 66 to 144 (TWDERQTFMV…VEDLPAGLVL (79 aa)) is domain II. Residues 145 to 155 (AGGAAPGGVFR) form a flexible linker region. The tract at residues 155 to 202 (RDALAGLGNLGYLEDEAAPVLKEVLKAEPDLDVAGALRAALKALARGR) is domain III.

It belongs to the RuvA family. Homotetramer. Forms an RuvA(8)-RuvB(12)-Holliday junction (HJ) complex. HJ DNA is sandwiched between 2 RuvA tetramers; dsDNA enters through RuvA and exits via RuvB. An RuvB hexamer assembles on each DNA strand where it exits the tetramer. Each RuvB hexamer is contacted by two RuvA subunits (via domain III) on 2 adjacent RuvB subunits; this complex drives branch migration. In the full resolvosome a probable DNA-RuvA(4)-RuvB(12)-RuvC(2) complex forms which resolves the HJ.

Its subcellular location is the cytoplasm. The RuvA-RuvB-RuvC complex processes Holliday junction (HJ) DNA during genetic recombination and DNA repair, while the RuvA-RuvB complex plays an important role in the rescue of blocked DNA replication forks via replication fork reversal (RFR). RuvA specifically binds to HJ cruciform DNA, conferring on it an open structure. The RuvB hexamer acts as an ATP-dependent pump, pulling dsDNA into and through the RuvAB complex. HJ branch migration allows RuvC to scan DNA until it finds its consensus sequence, where it cleaves and resolves the cruciform DNA. This Nitratidesulfovibrio vulgaris (strain DSM 19637 / Miyazaki F) (Desulfovibrio vulgaris) protein is Holliday junction branch migration complex subunit RuvA.